Reading from the N-terminus, the 154-residue chain is Endoribonuclease YbeY (154 aa).

3 residues coordinate Zn(2+): H113, H117, and H123.

It belongs to the endoribonuclease YbeY family. Requires Zn(2+) as cofactor.

The protein resides in the cytoplasm. Functionally, single strand-specific metallo-endoribonuclease involved in late-stage 70S ribosome quality control and in maturation of the 3' terminus of the 16S rRNA. In Aeromonas hydrophila subsp. hydrophila (strain ATCC 7966 / DSM 30187 / BCRC 13018 / CCUG 14551 / JCM 1027 / KCTC 2358 / NCIMB 9240 / NCTC 8049), this protein is Endoribonuclease YbeY.